The following is a 420-amino-acid chain: Glutamyl-tRNA reductase (420 aa).

Substrate contacts are provided by residues 49–52 (TCNR), S109, 114–116 (EPQ), and Q120. Residue C50 is the Nucleophile of the active site. Residue 189–194 (GAGETI) coordinates NADP(+).

It belongs to the glutamyl-tRNA reductase family. Homodimer.

The enzyme catalyses (S)-4-amino-5-oxopentanoate + tRNA(Glu) + NADP(+) = L-glutamyl-tRNA(Glu) + NADPH + H(+). It functions in the pathway porphyrin-containing compound metabolism; protoporphyrin-IX biosynthesis; 5-aminolevulinate from L-glutamyl-tRNA(Glu): step 1/2. Catalyzes the NADPH-dependent reduction of glutamyl-tRNA(Glu) to glutamate 1-semialdehyde (GSA). This chain is Glutamyl-tRNA reductase, found in Yersinia enterocolitica serotype O:8 / biotype 1B (strain NCTC 13174 / 8081).